We begin with the raw amino-acid sequence, 148 residues long: Large ribosomal subunit protein bL9 (148 aa).

The protein belongs to the bacterial ribosomal protein bL9 family.

In terms of biological role, binds to the 23S rRNA. The chain is Large ribosomal subunit protein bL9 from Caldicellulosiruptor bescii (strain ATCC BAA-1888 / DSM 6725 / KCTC 15123 / Z-1320) (Anaerocellum thermophilum).